We begin with the raw amino-acid sequence, 205 residues long: Small ribosomal subunit protein uS4 (205 aa).

The S4 RNA-binding domain occupies 94–157 (SRLDTVVYRM…KQIPLIQESV (64 aa)).

It belongs to the universal ribosomal protein uS4 family. In terms of assembly, part of the 30S ribosomal subunit. Contacts protein S5. The interaction surface between S4 and S5 is involved in control of translational fidelity.

Functionally, one of the primary rRNA binding proteins, it binds directly to 16S rRNA where it nucleates assembly of the body of the 30S subunit. Its function is as follows. With S5 and S12 plays an important role in translational accuracy. The chain is Small ribosomal subunit protein uS4 from Rickettsia conorii (strain ATCC VR-613 / Malish 7).